The following is a 91-amino-acid chain: Protein transport protein Sec61 subunit beta (91 aa).

The tract at residues Met-1–Ser-45 is disordered. Residues Met-1–Pro-62 are Cytoplasmic-facing. Polar residues predominate over residues Gln-30–Ser-45. Residues Val-63 to Ala-83 traverse the membrane as a helical segment.

It belongs to the SEC61-beta family. Heterotrimeric complex composed of SEC61, SEB1 and SSS1.

It is found in the endoplasmic reticulum membrane. Its function is as follows. Necessary for protein translocation in the endoplasmic reticulum. The protein is Protein transport protein Sec61 subunit beta (SBH1) of Yarrowia lipolytica (strain CLIB 122 / E 150) (Yeast).